A 188-amino-acid chain; its full sequence is GTP cyclohydrolase 1 (188 aa).

Residues Cys-76, His-79, and Cys-148 each coordinate Zn(2+).

This sequence belongs to the GTP cyclohydrolase I family. Homomer.

The catalysed reaction is GTP + H2O = 7,8-dihydroneopterin 3'-triphosphate + formate + H(+). It functions in the pathway cofactor biosynthesis; 7,8-dihydroneopterin triphosphate biosynthesis; 7,8-dihydroneopterin triphosphate from GTP: step 1/1. The polypeptide is GTP cyclohydrolase 1 (Pelotomaculum thermopropionicum (strain DSM 13744 / JCM 10971 / SI)).